Here is a 239-residue protein sequence, read N- to C-terminus: Zinc finger protein 575 (239 aa).

Residues 1-62 (MLGGSVKSEV…PQRPHRCPDC (62 aa)) are disordered. The segment covering 22-31 (PETKAPHQDL) has biased composition (basic and acidic residues). A compositionally biased stretch (basic residues) spans 46–57 (RPRRRPPPQRPH). C2H2-type zinc fingers lie at residues 57-79 (HRCPDCPKAFSYPSKLATHRLAH), 85-107 (HPCPDCPKAFSYPSKLAAHRLTH), 113-135 (HSCPHCPKAFGHRSKLAAHLWTH), 141-163 (YPCPDCPKSFCYPSKLAAHRHTH), 171-193 (YPCPHCPKAFSFPSKLAAHRLCH), and 207-230 (HRCSSCNQAFGQRRLLLVHQRSHH).

The protein belongs to the krueppel C2H2-type zinc-finger protein family.

Its subcellular location is the nucleus. Functionally, may be involved in transcriptional regulation. This is Zinc finger protein 575 (Znf575) from Mus musculus (Mouse).